The following is a 205-amino-acid chain: Rho GDP-dissociation inhibitor (205 aa).

The segment covering 1–11 (MSVNNEVSADQ) has biased composition (polar residues). Residues 1–31 (MSVNNEVSADQHNPELEDDTFEHGPPVSLGE) form a disordered region. At Ser-63 the chain carries Phosphoserine.

It belongs to the Rho GDI family.

The protein resides in the cytoplasm. It is found in the nucleus. Functionally, regulates the GDP/GTP exchange reaction of the Rho proteins by inhibiting the dissociation of GDP from them, and the subsequent binding of GTP to them. This is Rho GDP-dissociation inhibitor from Schizosaccharomyces pombe (strain 972 / ATCC 24843) (Fission yeast).